A 188-amino-acid chain; its full sequence is dCTP deaminase (188 aa).

DCTP-binding positions include 111–116 (KSTYAR), 135–137 (TLE), Gln156, Tyr170, and Gln180. Glu137 serves as the catalytic Proton donor/acceptor.

The protein belongs to the dCTP deaminase family. As to quaternary structure, homotrimer.

It catalyses the reaction dCTP + H2O + H(+) = dUTP + NH4(+). Its pathway is pyrimidine metabolism; dUMP biosynthesis; dUMP from dCTP (dUTP route): step 1/2. Functionally, catalyzes the deamination of dCTP to dUTP. This Cupriavidus metallidurans (strain ATCC 43123 / DSM 2839 / NBRC 102507 / CH34) (Ralstonia metallidurans) protein is dCTP deaminase.